We begin with the raw amino-acid sequence, 59 residues long: Conotoxin Sr5.4 (59 aa).

The first 22 residues, 1–22 (MRCLPVFVILLLLIASAPSVDA), serve as a signal peptide directing secretion. The propeptide occupies 23–44 (QLKTKDDVPLASFHDNAKGTQH).

It belongs to the conotoxin T superfamily. Post-translationally, contains 2 disulfide bonds that can be either 'C1-C3, C2-C4' or 'C1-C4, C2-C3', since these disulfide connectivities have been observed for conotoxins with cysteine framework V (for examples, see AC P0DQQ7 and AC P81755). Expressed by the venom duct.

It is found in the secreted. The polypeptide is Conotoxin Sr5.4 (Conus spurius (Alphabet cone)).